Here is a 716-residue protein sequence, read N- to C-terminus: Polyribonucleotide nucleotidyltransferase (716 aa).

Mg(2+) is bound by residues Asp488 and Asp494. The 60-residue stretch at 555–614 (PKIETITIPTDKIREVIGTGGKVIREIVATTGAKVDINDEGTVKVSASDGAKIKAAIDWI) folds into the KH domain. The 69-residue stretch at 624–692 (GAIYDGKVVK…DRGKTKLSMK (69 aa)) folds into the S1 motif domain. The segment at 695-716 (DQETGEDLSKKEAVSPEEAVNT) is disordered.

Belongs to the polyribonucleotide nucleotidyltransferase family. It depends on Mg(2+) as a cofactor.

It localises to the cytoplasm. It carries out the reaction RNA(n+1) + phosphate = RNA(n) + a ribonucleoside 5'-diphosphate. Its function is as follows. Involved in mRNA degradation. Catalyzes the phosphorolysis of single-stranded polyribonucleotides processively in the 3'- to 5'-direction. The polypeptide is Polyribonucleotide nucleotidyltransferase (Caulobacter sp. (strain K31)).